The primary structure comprises 127 residues: Glycine cleavage system H protein (127 aa).

One can recognise a Lipoyl-binding domain in the interval 24–105 (TAVVGITDFA…YNEGWIVKMK (82 aa)). K65 carries the N6-lipoyllysine modification.

This sequence belongs to the GcvH family. As to quaternary structure, the glycine cleavage system is composed of four proteins: P, T, L and H. It depends on (R)-lipoate as a cofactor.

The glycine cleavage system catalyzes the degradation of glycine. The H protein shuttles the methylamine group of glycine from the P protein to the T protein. The polypeptide is Glycine cleavage system H protein (Chlorobaculum parvum (strain DSM 263 / NCIMB 8327) (Chlorobium vibrioforme subsp. thiosulfatophilum)).